The primary structure comprises 462 residues: MQEGKISQIIGPVVDVDFAEGQLPSILDALTVTRQDGSKLVLETQQHLGEERVRRIAMEGTDGLVRGMSAKNTGKPIQVPVGEEVLGRMLNVVGDPIDGKGPVLSKKSYSIHRTAPKFDELSTKAEMFETGIKVIDLLEPYSRGGKTGLFGGAGVGKTVLIMELINNIAKEQSGFSVFAGVGERTREGNDLWHEMMESGVIDKTALVFGQMNEPPGARARVALTGLSIAEYFRDEEGRDVLLFIDNIFRFTQAGSEVSALLGRMPSAVGYQPTLSTEMGELQDRITSTKKGSVTSVQAIYVPADDLTDPAPATAFTHLDATTVLSRQIAELGIYPAVDPLDSTSRILDPNVIGDDHYDTAQAVKQILQRYKDLQDIIAILGMDELSDDDKLVVARARKVQRFLSQPFFVAEAFTGLAGKYVKLEDTIKGFKEIIAGRHDNLPEAAFYLVGTIEEAVAKVKTL.

An ATP-binding site is contributed by 151-158 (GGAGVGKT).

Belongs to the ATPase alpha/beta chains family. In terms of assembly, F-type ATPases have 2 components, CF(1) - the catalytic core - and CF(0) - the membrane proton channel. CF(1) has five subunits: alpha(3), beta(3), gamma(1), delta(1), epsilon(1). CF(0) has three main subunits: a(1), b(2) and c(9-12). The alpha and beta chains form an alternating ring which encloses part of the gamma chain. CF(1) is attached to CF(0) by a central stalk formed by the gamma and epsilon chains, while a peripheral stalk is formed by the delta and b chains.

It localises to the cell inner membrane. The catalysed reaction is ATP + H2O + 4 H(+)(in) = ADP + phosphate + 5 H(+)(out). In terms of biological role, produces ATP from ADP in the presence of a proton gradient across the membrane. The catalytic sites are hosted primarily by the beta subunits. This chain is ATP synthase subunit beta, found in Chlorobium limicola.